Here is a 199-residue protein sequence, read N- to C-terminus: Prolactin-2 (199 aa).

Disulfide bonds link Cys-4–Cys-11, Cys-58–Cys-174, and Cys-191–Cys-199.

This sequence belongs to the somatotropin/prolactin family.

It is found in the secreted. This chain is Prolactin-2, found in Alligator mississippiensis (American alligator).